A 116-amino-acid polypeptide reads, in one-letter code: Iron-sulfur cluster insertion protein ErpA (116 aa).

Cys44, Cys108, and Cys110 together coordinate iron-sulfur cluster.

This sequence belongs to the HesB/IscA family. Homodimer. It depends on iron-sulfur cluster as a cofactor.

Its function is as follows. Required for insertion of 4Fe-4S clusters for at least IspG. The polypeptide is Iron-sulfur cluster insertion protein ErpA (Francisella tularensis subsp. mediasiatica (strain FSC147)).